Consider the following 678-residue polypeptide: MKSYLLEIGCEELPPKAILTYKEFLKEYAHQTFKDFFIYNSPENIKIYATPRRLAVLIKNLKKKQDNQKITLIGPPYKVAVDSEGKFTKAALSFAEKNNIPLEKLEKITTEKGEYLGATIEKEGESLELFIKHKIPQLFNQFPQLKSMKWNNSDYRFPRPIRWIVSLLDDKVIEFEVASVKTDRFTHLHRFMTKPIGRGERKDINHANDYEEITKLGYIIANFEDRKHSIKTQYEGFARQLNASIIEDDELIDEITCLTEFPVGIVGDFSPEYLTLPKEVIITVCKHHQRYLNFEKDGKLIPKFLAFSNNAVKDRDIVKNGYEKVLRARLEDALFFYKEDLKKKLDDNIEKLKGIQFHEKLGSMYDKVLRNLELALKLADLTGYKDAEKIKRAVMLSKADLLTEMVKEFDELQGIMGMYYSQKQGEEEEISKSIYEHYLPKTAEDNIPETNLGTLLALADKLDTVISFIKIGELPKPSADPFGIRRNAIGIVRLLVEKEIDLDLRKVIDDESILDFILSRLESYLQSKGYKTDIINAVLSLKDGNIYRNYLKVKALSQLRNLPDYENVIMVFKRVGNIIPEDFKFSNVDVNLLVSQPEKELYKKFIEIKDKFKRFIENKDYDKALGLLLELKPYIDRFFDNVMIMVEDEKLKNNRLSLLKEINDLFRNIADFTKLIGG.

Belongs to the class-II aminoacyl-tRNA synthetase family. As to quaternary structure, tetramer of two alpha and two beta subunits.

It localises to the cytoplasm. The enzyme catalyses tRNA(Gly) + glycine + ATP = glycyl-tRNA(Gly) + AMP + diphosphate. The polypeptide is Glycine--tRNA ligase beta subunit (Sulfurihydrogenibium sp. (strain YO3AOP1)).